A 396-amino-acid chain; its full sequence is Tryptophan synthase beta chain (396 aa).

Lys86 is modified (N6-(pyridoxal phosphate)lysine).

The protein belongs to the TrpB family. As to quaternary structure, tetramer of two alpha and two beta chains. Pyridoxal 5'-phosphate is required as a cofactor.

It carries out the reaction (1S,2R)-1-C-(indol-3-yl)glycerol 3-phosphate + L-serine = D-glyceraldehyde 3-phosphate + L-tryptophan + H2O. Its pathway is amino-acid biosynthesis; L-tryptophan biosynthesis; L-tryptophan from chorismate: step 5/5. The beta subunit is responsible for the synthesis of L-tryptophan from indole and L-serine. This is Tryptophan synthase beta chain from Pectobacterium atrosepticum (strain SCRI 1043 / ATCC BAA-672) (Erwinia carotovora subsp. atroseptica).